The primary structure comprises 470 residues: Probable glycosyltransferase At3g07620 (470 aa).

Over 1–7 the chain is Cytoplasmic; that stretch reads MRDYIPK. A helical; Signal-anchor transmembrane segment spans residues 8–28; that stretch reads YLNAFLLAFATFAVGFAIFIA. Residues 29 to 470 lie on the Lumenal side of the membrane; it reads KDSNSSSHLY…WLRRLNVKLL (442 aa). N-linked (GlcNAc...) asparagine glycosylation is found at Asn-32, Asn-73, Asn-105, Asn-236, Asn-274, and Asn-299.

The protein belongs to the glycosyltransferase 47 family.

The protein localises to the golgi apparatus membrane. In terms of biological role, may be involved in cell wall biosynthesis. The polypeptide is Probable glycosyltransferase At3g07620 (Arabidopsis thaliana (Mouse-ear cress)).